The primary structure comprises 173 residues: Orotate phosphoribosyltransferase (173 aa).

5-phospho-alpha-D-ribose 1-diphosphate is bound by residues Arg-87, Lys-88, Lys-91, and 113–121 (EDIATTGQS). Thr-117 and Arg-145 together coordinate orotate.

This sequence belongs to the purine/pyrimidine phosphoribosyltransferase family. PyrE subfamily. In terms of assembly, homodimer. Mg(2+) serves as cofactor.

The enzyme catalyses orotidine 5'-phosphate + diphosphate = orotate + 5-phospho-alpha-D-ribose 1-diphosphate. It functions in the pathway pyrimidine metabolism; UMP biosynthesis via de novo pathway; UMP from orotate: step 1/2. Functionally, catalyzes the transfer of a ribosyl phosphate group from 5-phosphoribose 1-diphosphate to orotate, leading to the formation of orotidine monophosphate (OMP). The polypeptide is Orotate phosphoribosyltransferase (Natronomonas pharaonis (strain ATCC 35678 / DSM 2160 / CIP 103997 / JCM 8858 / NBRC 14720 / NCIMB 2260 / Gabara) (Halobacterium pharaonis)).